Consider the following 365-residue polypeptide: Aminomethyltransferase (365 aa).

The protein belongs to the GcvT family. In terms of assembly, the glycine cleavage system is composed of four proteins: P, T, L and H.

It carries out the reaction N(6)-[(R)-S(8)-aminomethyldihydrolipoyl]-L-lysyl-[protein] + (6S)-5,6,7,8-tetrahydrofolate = N(6)-[(R)-dihydrolipoyl]-L-lysyl-[protein] + (6R)-5,10-methylene-5,6,7,8-tetrahydrofolate + NH4(+). Functionally, the glycine cleavage system catalyzes the degradation of glycine. This Chlorobium luteolum (strain DSM 273 / BCRC 81028 / 2530) (Pelodictyon luteolum) protein is Aminomethyltransferase.